The sequence spans 248 residues: tRNA (guanine-N(1)-)-methyltransferase (248 aa).

Residues glycine 113 and 133–138 (VGDYVL) contribute to the S-adenosyl-L-methionine site.

It belongs to the RNA methyltransferase TrmD family. In terms of assembly, homodimer.

Its subcellular location is the cytoplasm. The catalysed reaction is guanosine(37) in tRNA + S-adenosyl-L-methionine = N(1)-methylguanosine(37) in tRNA + S-adenosyl-L-homocysteine + H(+). Its function is as follows. Specifically methylates guanosine-37 in various tRNAs. The protein is tRNA (guanine-N(1)-)-methyltransferase of Shewanella sp. (strain W3-18-1).